The chain runs to 284 residues: Acetylglutamate kinase (284 aa).

Residues 66 to 67 (GG), arginine 88, and asparagine 179 each bind substrate.

It belongs to the acetylglutamate kinase family. ArgB subfamily.

The protein resides in the cytoplasm. It catalyses the reaction N-acetyl-L-glutamate + ATP = N-acetyl-L-glutamyl 5-phosphate + ADP. It participates in amino-acid biosynthesis; L-arginine biosynthesis; N(2)-acetyl-L-ornithine from L-glutamate: step 2/4. Catalyzes the ATP-dependent phosphorylation of N-acetyl-L-glutamate. The sequence is that of Acetylglutamate kinase from Actinobacillus pleuropneumoniae serotype 3 (strain JL03).